The sequence spans 281 residues: MNQKIFLCSICNINSGTCNEDCKFCSQSVRYKADIDRYKQKEISLILKEAQDAYSNGALGFCLVTSDKGLNDKTLNFVCSIAEVLSKELPELRLIACNGTATIEQLLTLRASGIKAYNHNLETSREFYPKICTTHSWDERYETCQNINNAGLVLISGGIFGLGEREEDRVSMLKSLDSLKPTSVPINFYHHNEALELSPNPLSVDEALSLIKLTRAMIPDAQRIMVAGGRELMFGDRESEIFANGANSIVIGNYLTTSGKAMQRDLEMLKSLNLDVASSVK.

The Radical SAM core domain maps to Met-1–Arg-230. [4Fe-4S] cluster contacts are provided by Cys-18, Cys-22, and Cys-25. [2Fe-2S] cluster contacts are provided by Cys-62, Cys-97, and Arg-223.

It belongs to the radical SAM superfamily. Biotin synthase family. As to quaternary structure, homodimer. [4Fe-4S] cluster serves as cofactor. [2Fe-2S] cluster is required as a cofactor.

The catalysed reaction is (4R,5S)-dethiobiotin + (sulfur carrier)-SH + 2 reduced [2Fe-2S]-[ferredoxin] + 2 S-adenosyl-L-methionine = (sulfur carrier)-H + biotin + 2 5'-deoxyadenosine + 2 L-methionine + 2 oxidized [2Fe-2S]-[ferredoxin]. The protein operates within cofactor biosynthesis; biotin biosynthesis; biotin from 7,8-diaminononanoate: step 2/2. In terms of biological role, catalyzes the conversion of dethiobiotin (DTB) to biotin by the insertion of a sulfur atom into dethiobiotin via a radical-based mechanism. This is Biotin synthase from Sulfurimonas denitrificans (strain ATCC 33889 / DSM 1251) (Thiomicrospira denitrificans (strain ATCC 33889 / DSM 1251)).